Reading from the N-terminus, the 510-residue chain is NAD(P)H-quinone oxidoreductase subunit 2, chloroplastic (510 aa).

13 consecutive transmembrane segments (helical) span residues D28–I48, I57–F77, I99–I119, M124–C144, L149–Y169, Y183–G203, P227–A247, W295–I315, M323–D343, Y354–L374, A395–F415, L418–L438, and M484–I504.

The protein belongs to the complex I subunit 2 family. As to quaternary structure, NDH is composed of at least 16 different subunits, 5 of which are encoded in the nucleus.

The protein resides in the plastid. The protein localises to the chloroplast thylakoid membrane. It catalyses the reaction a plastoquinone + NADH + (n+1) H(+)(in) = a plastoquinol + NAD(+) + n H(+)(out). It carries out the reaction a plastoquinone + NADPH + (n+1) H(+)(in) = a plastoquinol + NADP(+) + n H(+)(out). NDH shuttles electrons from NAD(P)H:plastoquinone, via FMN and iron-sulfur (Fe-S) centers, to quinones in the photosynthetic chain and possibly in a chloroplast respiratory chain. The immediate electron acceptor for the enzyme in this species is believed to be plastoquinone. Couples the redox reaction to proton translocation, and thus conserves the redox energy in a proton gradient. The sequence is that of NAD(P)H-quinone oxidoreductase subunit 2, chloroplastic from Silene latifolia (White campion).